Consider the following 159-residue polypeptide: NAD(P)H-quinone oxidoreductase subunit J, chloroplastic (159 aa).

Belongs to the complex I 30 kDa subunit family. In terms of assembly, NDH is composed of at least 16 different subunits, 5 of which are encoded in the nucleus. Leaves.

It localises to the plastid. The protein localises to the chloroplast thylakoid membrane. The enzyme catalyses a plastoquinone + NADH + (n+1) H(+)(in) = a plastoquinol + NAD(+) + n H(+)(out). It catalyses the reaction a plastoquinone + NADPH + (n+1) H(+)(in) = a plastoquinol + NADP(+) + n H(+)(out). In terms of biological role, NDH shuttles electrons from NAD(P)H:plastoquinone, via FMN and iron-sulfur (Fe-S) centers, to quinones in the photosynthetic chain and possibly in a chloroplast respiratory chain. The immediate electron acceptor for the enzyme in this species is believed to be plastoquinone. Couples the redox reaction to proton translocation, and thus conserves the redox energy in a proton gradient. This Zea mays (Maize) protein is NAD(P)H-quinone oxidoreductase subunit J, chloroplastic.